Here is a 564-residue protein sequence, read N- to C-terminus: Histone acetyltransferase rtt109 (564 aa).

Residues phenylalanine 138, 157 to 159, and tryptophan 167 each bind acetyl-CoA; that span reads HVL. Residue aspartate 261 is the Proton donor/acceptor of the active site. Position 263 is an N6-acetyllysine; by autocatalysis (lysine 263). Disordered stretches follow at residues 355–420 and 506–549; these read YDKV…NAFY and RKKD…ESPG. Over residues 366–377 the composition is skewed to low complexity; the sequence is AVSVSTDSQSSD. Composition is skewed to polar residues over residues 394-417 and 512-521; these read DPST…TDQN and SQATTATSAQ. Residues 529–544 are compositionally biased toward low complexity; it reads GTVSTAVTAEASTTGT.

The protein belongs to the RTT109 family.

It localises to the nucleus. Its subcellular location is the vacuole. It catalyses the reaction L-lysyl-[protein] + acetyl-CoA = N(6)-acetyl-L-lysyl-[protein] + CoA + H(+). The enzyme catalyses L-lysyl-[histone] + acetyl-CoA = N(6)-acetyl-L-lysyl-[histone] + CoA + H(+). Its function is as follows. Histone chaperone-dependent acetylase that modifies 'Lys-56' of histone H3 (H3K56ac). Histone H3 'Lys-56' acetylation may be required for S-phase-linked DNA damage tolerance. Also acetylates 'Lys-9' of histone H3 (H3K9ac). Autoacetylates. In Aspergillus flavus, this protein is Histone acetyltransferase rtt109.